A 1162-amino-acid chain; its full sequence is Sialidase (1162 aa).

BNR repeat units lie at residues 23 to 34, 163 to 174, and 209 to 220; these read KYSVDDGETWET, FYSEDDGKTWKF, and YESSDMEKPWVE. N-linked (GlcNAc...) asparagine glycosylation is found at Asn-342 and Asn-394. The disordered stretch occupies residues 587-1123; sequence HMDSSSDSSA…STPSTPAGSS (537 aa). Over residues 589–615 the composition is skewed to low complexity; that stretch reads DSSSDSSAHSTPSTPADSSAHSTPSTP. The interval 589–1120 is 44 X 12 AA tandem repeats, LTR domain; the sequence is DSSSDSSAHS…SAHSTPSTPA (532 aa). Composition is skewed to polar residues over residues 616-689 and 699-1123; these read VDSS…TPVD and PADS…AGSS. Asn-1125 carries N-linked (GlcNAc...) asparagine glycosylation.

The protein belongs to the glycosyl hydrolase 33 family.

It localises to the cell membrane. It catalyses the reaction Hydrolysis of alpha-(2-&gt;3)-, alpha-(2-&gt;6)-, alpha-(2-&gt;8)- glycosidic linkages of terminal sialic acid residues in oligosaccharides, glycoproteins, glycolipids, colominic acid and synthetic substrates.. In terms of biological role, developmentally regulated neuraminidase implicated in parasite invasion of cells. This is Sialidase (TCNA) from Trypanosoma cruzi.